The chain runs to 226 residues: Uracil-DNA glycosylase (226 aa).

Asp64 (proton acceptor) is an active-site residue.

It belongs to the uracil-DNA glycosylase (UDG) superfamily. UNG family.

It is found in the cytoplasm. It catalyses the reaction Hydrolyzes single-stranded DNA or mismatched double-stranded DNA and polynucleotides, releasing free uracil.. Its function is as follows. Excises uracil residues from the DNA which can arise as a result of misincorporation of dUMP residues by DNA polymerase or due to deamination of cytosine. In Photorhabdus laumondii subsp. laumondii (strain DSM 15139 / CIP 105565 / TT01) (Photorhabdus luminescens subsp. laumondii), this protein is Uracil-DNA glycosylase.